The following is a 290-amino-acid chain: tRNA dimethylallyltransferase (290 aa).

11–18 (GPTASGKS) contributes to the ATP binding site. 13 to 18 (TASGKS) is a substrate binding site. Interaction with substrate tRNA regions lie at residues 36-39 (DSMQ) and 158-162 (QRIVR).

The protein belongs to the IPP transferase family. In terms of assembly, monomer. Requires Mg(2+) as cofactor.

It catalyses the reaction adenosine(37) in tRNA + dimethylallyl diphosphate = N(6)-dimethylallyladenosine(37) in tRNA + diphosphate. In terms of biological role, catalyzes the transfer of a dimethylallyl group onto the adenine at position 37 in tRNAs that read codons beginning with uridine, leading to the formation of N6-(dimethylallyl)adenosine (i(6)A). The polypeptide is tRNA dimethylallyltransferase (Bartonella henselae (strain ATCC 49882 / DSM 28221 / CCUG 30454 / Houston 1) (Rochalimaea henselae)).